A 364-amino-acid chain; its full sequence is Chorismate synthase (364 aa).

Arg47 provides a ligand contact to NADP(+). FMN is bound by residues 124–126 (RAS), Gly287, 302–306 (KPTAT), and Arg328.

This sequence belongs to the chorismate synthase family. In terms of assembly, homotetramer. The cofactor is FMNH2.

It catalyses the reaction 5-O-(1-carboxyvinyl)-3-phosphoshikimate = chorismate + phosphate. The protein operates within metabolic intermediate biosynthesis; chorismate biosynthesis; chorismate from D-erythrose 4-phosphate and phosphoenolpyruvate: step 7/7. Catalyzes the anti-1,4-elimination of the C-3 phosphate and the C-6 proR hydrogen from 5-enolpyruvylshikimate-3-phosphate (EPSP) to yield chorismate, which is the branch point compound that serves as the starting substrate for the three terminal pathways of aromatic amino acid biosynthesis. This reaction introduces a second double bond into the aromatic ring system. The chain is Chorismate synthase from Prochlorococcus marinus (strain MIT 9515).